The primary structure comprises 64 residues: Cytochrome b-c1 complex subunit 9 (64 aa).

Over 2–21 (VAPTLTARLYSLLFRRTSTF) the chain is Mitochondrial matrix. The chain crosses the membrane as a helical span at residues 22–47 (ALTIVVGALFFERAFDQGADAIYEHI). The Mitochondrial intermembrane segment spans residues 48–64 (NEGKLWKHIKHKYENKE).

The protein belongs to the UQCR10/QCR9 family. In terms of assembly, component of the ubiquinol-cytochrome c oxidoreductase (cytochrome b-c1 complex, complex III, CIII), a multisubunit enzyme composed of 11 subunits. The complex is composed of 3 respiratory subunits cytochrome b, cytochrome c1 and Rieske protein UQCRFS1, 2 core protein subunits UQCRC1/QCR1 and UQCRC2/QCR2, and 6 low-molecular weight protein subunits UQCRH/QCR6, UQCRB/QCR7, UQCRQ/QCR8, UQCR10/QCR9, UQCR11/QCR10 and subunit 9, the cleavage product of Rieske protein UQCRFS1. The complex exists as an obligatory dimer and forms supercomplexes (SCs) in the inner mitochondrial membrane with NADH-ubiquinone oxidoreductase (complex I, CI) and cytochrome c oxidase (complex IV, CIV), resulting in different assemblies (supercomplex SCI(1)III(2)IV(1) and megacomplex MCI(2)III(2)IV(2)). Interacts with STMP1.

Its subcellular location is the mitochondrion inner membrane. In terms of biological role, component of the ubiquinol-cytochrome c oxidoreductase, a multisubunit transmembrane complex that is part of the mitochondrial electron transport chain which drives oxidative phosphorylation. The respiratory chain contains 3 multisubunit complexes succinate dehydrogenase (complex II, CII), ubiquinol-cytochrome c oxidoreductase (cytochrome b-c1 complex, complex III, CIII) and cytochrome c oxidase (complex IV, CIV), that cooperate to transfer electrons derived from NADH and succinate to molecular oxygen, creating an electrochemical gradient over the inner membrane that drives transmembrane transport and the ATP synthase. The cytochrome b-c1 complex catalyzes electron transfer from ubiquinol to cytochrome c, linking this redox reaction to translocation of protons across the mitochondrial inner membrane, with protons being carried across the membrane as hydrogens on the quinol. In the process called Q cycle, 2 protons are consumed from the matrix, 4 protons are released into the intermembrane space and 2 electrons are passed to cytochrome c. The chain is Cytochrome b-c1 complex subunit 9 (UQCR10) from Bos taurus (Bovine).